The sequence spans 334 residues: Spermidine synthase 1 (334 aa).

A disordered region spans residues 1 to 37 (MAAPENTLHSTDSPLKRQREDEVNGVSDTLSKEPQPN). The segment covering 26 to 37 (VSDTLSKEPQPN) has biased composition (polar residues). One can recognise a PABS domain in the interval 44–281 (PGWFSEISPM…GMIGFMLCST (238 aa)). Glutamine 75 lines the S-adenosyl 3-(methylsulfanyl)propylamine pocket. Tyrosine 105 is a putrescine binding site. S-adenosyl 3-(methylsulfanyl)propylamine-binding positions include glutamine 106, aspartate 130, glutamate 150, 181–182 (DG), and aspartate 200. Aspartate 200 (proton acceptor) is an active-site residue. Putrescine-binding positions include 200–203 (DSSD) and tyrosine 269.

It belongs to the spermidine/spermine synthase family.

It carries out the reaction S-adenosyl 3-(methylsulfanyl)propylamine + putrescine = S-methyl-5'-thioadenosine + spermidine + H(+). Its pathway is amine and polyamine biosynthesis; spermidine biosynthesis; spermidine from putrescine: step 1/1. The sequence is that of Spermidine synthase 1 (SPDSYN1) from Pisum sativum (Garden pea).